The primary structure comprises 264 residues: Purine nucleoside phosphorylase slr1573 (264 aa).

The Zn(2+) site is built by His-61, Cys-104, and His-121.

This sequence belongs to the purine nucleoside phosphorylase YfiH/LACC1 family. In terms of assembly, homodimer. Cu(2+) serves as cofactor. The cofactor is Zn(2+).

It carries out the reaction adenosine + phosphate = alpha-D-ribose 1-phosphate + adenine. It catalyses the reaction S-methyl-5'-thioadenosine + phosphate = 5-(methylsulfanyl)-alpha-D-ribose 1-phosphate + adenine. The catalysed reaction is inosine + phosphate = alpha-D-ribose 1-phosphate + hypoxanthine. The enzyme catalyses adenosine + H2O + H(+) = inosine + NH4(+). Its function is as follows. Purine nucleoside enzyme that catalyzes the phosphorolysis of adenosine and inosine nucleosides, yielding D-ribose 1-phosphate and the respective free bases, adenine and hypoxanthine. Also catalyzes the phosphorolysis of S-methyl-5'-thioadenosine into adenine and S-methyl-5-thio-alpha-D-ribose 1-phosphate. Also has adenosine deaminase activity. This is Purine nucleoside phosphorylase slr1573 from Synechocystis sp. (strain ATCC 27184 / PCC 6803 / Kazusa).